Here is a 1604-residue protein sequence, read N- to C-terminus: E3 ubiquitin-protein ligase HECW1 (1604 aa).

The C2 domain maps to 182-318 (SAAPIFKGIG…LERHAIGDRV (137 aa)). 4 disordered regions span residues 350 to 539 (DEEI…CSLP), 572 to 604 (PSAQ…LSEV), 642 to 667 (GIGA…QQGA), and 727 to 826 (STVF…TIDE). The segment covering 362–380 (SAETQDSIMNSMVGNSNGE) has biased composition (polar residues). A compositionally biased stretch (basic and acidic residues) spans 387 to 396 (EFCKDAKPES). The segment covering 398 to 412 (SEGNGVNSSENQNQE) has biased composition (polar residues). 2 stretches are compositionally biased toward acidic residues: residues 435 to 444 (APEEPGELQD) and 458 to 469 (EVAEGLPLDEDS). Basic and acidic residues predominate over residues 494-505 (GAREEEMQKGKD). A compositionally biased stretch (acidic residues) spans 580–589 (TEEEDGLEEE). Basic and acidic residues predominate over residues 590-601 (STLKESSEKDGL). Polar residues-rich tracts occupy residues 654–667 (STGS…QQGA), 748–762 (DSVQ…STNG), and 803–812 (HNSQPISQLP). A WW 1 domain is found at 826 to 859 (EPLPPNWEARIDSHGRVFYVDHINRTTTWQRPSM). S871 carries the post-translational modification Phosphoserine. Positions 871-898 (SVHQMEQLNRRYQNIQRTMATERAEEDS) form a coiled coil. A disordered region spans residues 890–936 (ATERAEEDSGNQNSEQIPDGGGGGGGGSDSEAESSQSSLDLRREGSL). A compositionally biased stretch (gly residues) spans 908–917 (DGGGGGGGGS). S935 and S937 each carry phosphoserine. One can recognise a WW 2 domain in the interval 1016–1049 (LELPRGWEIKTDHQGKSFFVDHNSRATTFIDPRI). The HECT domain maps to 1269–1604 (SRKELQRNKL…VEETSTFGLE (336 aa)). Residue C1572 is the Glycyl thioester intermediate of the active site.

As to quaternary structure, interacts with DVL1 and SSR3. Predominantly expressed in neurons of the spinal cord.

It localises to the cytoplasm. It catalyses the reaction S-ubiquitinyl-[E2 ubiquitin-conjugating enzyme]-L-cysteine + [acceptor protein]-L-lysine = [E2 ubiquitin-conjugating enzyme]-L-cysteine + N(6)-ubiquitinyl-[acceptor protein]-L-lysine.. Its pathway is protein modification; protein ubiquitination. In terms of biological role, E3 ubiquitin-protein ligase that mediates ubiquitination and subsequent degradation of DVL1. The protein is E3 ubiquitin-protein ligase HECW1 (Hecw1) of Mus musculus (Mouse).